The following is a 160-amino-acid chain: Ribonuclease P protein component 2 (160 aa).

Belongs to the eukaryotic/archaeal RNase P protein component 2 family. As to quaternary structure, consists of a catalytic RNA component and at least 4-5 protein subunits.

It localises to the cytoplasm. The catalysed reaction is Endonucleolytic cleavage of RNA, removing 5'-extranucleotides from tRNA precursor.. Part of ribonuclease P, a protein complex that generates mature tRNA molecules by cleaving their 5'-ends. The polypeptide is Ribonuclease P protein component 2 (Methanosphaerula palustris (strain ATCC BAA-1556 / DSM 19958 / E1-9c)).